Reading from the N-terminus, the 114-residue chain is uncharacterized protein (114 aa).

The N-myristoyl glycine; by host moiety is linked to residue Gly2. Helical transmembrane passes span 11 to 31 (FGLILVGAIIFTASYLWKDLL) and 44 to 64 (GLMWRSIYTILVTVILVLVAI). Positions 73–114 (VNKDSKDPKDKSIEFDDSPIRDGSSGTPDNSNEPTDLSVETS) are disordered. A compositionally biased stretch (basic and acidic residues) spans 75 to 92 (KDSKDPKDKSIEFDDSPI). Residues 96–114 (SSGTPDNSNEPTDLSVETS) are compositionally biased toward polar residues.

It localises to the membrane. This is an uncharacterized protein from Acanthamoeba polyphaga (Amoeba).